The primary structure comprises 60 residues: Large ribosomal subunit protein uL30 (60 aa).

The protein belongs to the universal ribosomal protein uL30 family. In terms of assembly, part of the 50S ribosomal subunit.

The sequence is that of Large ribosomal subunit protein uL30 from Shewanella woodyi (strain ATCC 51908 / MS32).